Consider the following 656-residue polypeptide: 1-deoxy-D-xylulose-5-phosphate synthase 1 (656 aa).

Thiamine diphosphate contacts are provided by residues histidine 73 and 113–115 (SHA). Aspartate 144 is a Mg(2+) binding site. Thiamine diphosphate is bound by residues 145-146 (GA), asparagine 174, tyrosine 285, and glutamate 367. Asparagine 174 serves as a coordination point for Mg(2+). Residues 625–656 (AGDRAGGPAVEQPGDGRMSGDGRIVMPAQGEN) are disordered.

This sequence belongs to the transketolase family. DXPS subfamily. Homodimer. It depends on Mg(2+) as a cofactor. Thiamine diphosphate serves as cofactor.

The catalysed reaction is D-glyceraldehyde 3-phosphate + pyruvate + H(+) = 1-deoxy-D-xylulose 5-phosphate + CO2. Its pathway is metabolic intermediate biosynthesis; 1-deoxy-D-xylulose 5-phosphate biosynthesis; 1-deoxy-D-xylulose 5-phosphate from D-glyceraldehyde 3-phosphate and pyruvate: step 1/1. Its function is as follows. Catalyzes the acyloin condensation reaction between C atoms 2 and 3 of pyruvate and glyceraldehyde 3-phosphate to yield 1-deoxy-D-xylulose-5-phosphate (DXP). This is 1-deoxy-D-xylulose-5-phosphate synthase 1 from Streptomyces coelicolor (strain ATCC BAA-471 / A3(2) / M145).